A 1486-amino-acid polypeptide reads, in one-letter code: MTKANGAEQLADWKFQYDLLTNELFHLHEFTSLLEFDPAFRHESDSFARFLADKHLELRMEEDAGAPGLEESSAMRRIRRRQKRGRGEEEGNALLKGVEELVEQKYADLRARLDRPMLKQGPRKRKQPGDAAKTALPHDSKKRKSAVVRKETNDEEHLKEEKSASPTVWSPESPQRDTYRTIHPSGDHEGYQSSSSDSFYFTTSSEDEEPTVKRSLKRKKAPVRRIKLIVHPPKQTVTNPLHILKPECSSLHEFLQSYKSLDEDISIEEFDSYIASQRKVVSAIRKGLKSGVLTYDRHTDSIQGISLKDVQNSQANKPEPITTFYQEQEKHTLRDHLNNHGVVMSRMFQDRKRGRIARARKISQMIEQHFKHVAGAEERKTKEEEKRRRALARAAVQAVKKRWNLAERAYKVLKKDEEDQLKRIQGKEHLSKMLEQSTQLLGAQLNQNDDSDDETSSQVLSENESSLGDEEMSSSSELDDSEVEAGEDDSKLTVEQLRAKYSALEHITIDGRSQNSEVSSMTENPEEDPQEYKILLSEREKAELHRTFETEENNILDEDHSSSSSFSESEISQTSSSENESLINSNSSQTPGLASLFGNVAEELSDDAHYSTEESLSSTPNEDQEGVQPNADAVSNMEIDSLEMQDKDESTNLEKLSVVDVPVPPLLRGTLRTYQKQGLNWLASLYNNNTNGILADEMGLGKTIQTIALLAYLACEKENWGPHLIIVPTSVLLNWEMEFKRFAPGFKVLSYYGSPQQRKEKRRGWNKLDAFHVCITSYQLVVHDQHSFKRKKWQYMILDEAHNIKNFKSTRWQALLNFNTRRRLLLTGTPLQNNIAELWSLLYFLMPQTALENGKISGFADLDAFQQWFGKPVDKIIAANDSEHDDETRRTVSKLHQVLRPYLLRRLKADVEKQMPAKYEHILYCRLSKRQRFLYDDFMSRAQTKATLASGNFMSIINCLMQLRKVCNHPDLFEVRPILTSFCMDRSVMSNYAHLNQLVLKNLNKHALDTVVNLQCTNLAFTQNDFNMETHYADSCARLQCVRQFSEAVEKLRKDASLPDAKDDPNVLNYQDMHEFYTGYTVRKRLRLIDQYRHTFYLNSLRCEKRPVYGINLVRLVSVHHRPPLECNVMSELMKPLETRLVTHKRIIDEFAIITPTAITLDTRVLSLGLDSEAAVHPVIKSDINTQLSRMKNPFHLLQTKLSIAFPDKSLLQYDCGKLQSLAVLLRRLKEEGHRALIFTQMTKVLDILEQFLNYHGYLYMRLDGATKIEDRQILTERFNTDPRITVFILSSRSGGLGINLTGADTVIFYDSDWNPAMDKQCQDRCHRIGQTRDVHIYRFVSEHTIESNILKKANQKRQLDNIVIQKGEFTTDYFSRLSVKDLLGSDETEEIADERPLLEDPATTADSKKLERLLAQAEDEDDVKAARLAMKEVDVDDRDFRESSTCANPSPDEDVDEEPVEDEYEGTRHVEEYMIRFIANGYLYD.

Disordered stretches follow at residues 63–89 and 113–219; these read DAGA…RGEE and LDRP…LKRK. The segment covering 148 to 163 has biased composition (basic and acidic residues); the sequence is VRKETNDEEHLKEEKS. The segment covering 164 to 173 has biased composition (polar residues); it reads ASPTVWSPES. Over residues 174 to 190 the composition is skewed to basic and acidic residues; that stretch reads PQRDTYRTIHPSGDHEG. Residues 193–204 are compositionally biased toward low complexity; sequence SSSSDSFYFTTS. The HSA domain maps to 321 to 393; that stretch reads ITTFYQEQEK…EEKRRRALAR (73 aa). Disordered stretches follow at residues 446 to 492, 508 to 530, 548 to 590, and 606 to 628; these read NQND…DSKL, TIDG…EDPQ, FETE…SSQT, and DDAH…EGVQ. Residues 467 to 487 show a composition bias toward acidic residues; that stretch reads LGDEEMSSSSELDDSEVEAGE. Over residues 511–523 the composition is skewed to polar residues; it reads GRSQNSEVSSMTE. The span at 562-588 shows a compositional bias: low complexity; that stretch reads SSSSFSESEISQTSSSENESLINSNSS. The Helicase ATP-binding domain occupies 683 to 848; that stretch reads ASLYNNNTNG…WSLLYFLMPQ (166 aa). 696 to 703 contacts ATP; that stretch reads DEMGLGKT. Residues 799 to 802 carry the DEAH box motif; the sequence is DEAH. A Helicase C-terminal domain is found at 1221-1371; sequence SLAVLLRRLK…NIVIQKGEFT (151 aa). The segment at 1436–1468 is disordered; that stretch reads VDDRDFRESSTCANPSPDEDVDEEPVEDEYEGT. Over residues 1452–1465 the composition is skewed to acidic residues; sequence PDEDVDEEPVEDEY.

It belongs to the SNF2/RAD54 helicase family. SWR1 subfamily. In terms of assembly, component of the SWR1 chromatin-remodeling complex.

The protein localises to the nucleus. The enzyme catalyses ATP + H2O = ADP + phosphate + H(+). Catalytic component of the SWR1 complex which mediates the ATP-dependent exchange of histone H2A for the H2A variant HZT1 leading to transcriptional regulation of selected genes by chromatin remodeling. The sequence is that of Helicase SWR1 (SWR1) from Eremothecium gossypii (strain ATCC 10895 / CBS 109.51 / FGSC 9923 / NRRL Y-1056) (Yeast).